Consider the following 312-residue polypeptide: Gamma-soluble NSF attachment protein (312 aa).

Positions 281-312 (KKKSPATPQAKPDGVTATAADEEEDEYSGGLC) are disordered. Ser284 bears the Phosphoserine mark. Thr287 carries the post-translational modification Phosphothreonine. Over residues 300–312 (ADEEEDEYSGGLC) the composition is skewed to acidic residues. The residue at position 308 (Ser308) is a Phosphoserine.

The protein belongs to the SNAP family. As to quaternary structure, interacts with RAB11FIP5. Interacts with VTI1A.

The protein resides in the membrane. It is found in the golgi apparatus. In terms of biological role, required for vesicular transport between the endoplasmic reticulum and the Golgi apparatus. This chain is Gamma-soluble NSF attachment protein, found in Homo sapiens (Human).